A 306-amino-acid chain; its full sequence is uncharacterized protein (306 aa).

Residue Tyr51 is the Proton donor of the active site. 197–207 contributes to the NADP(+) binding site; that stretch reads GPVAKGLLTEK.

Belongs to the aldo/keto reductase family. Aldo/keto reductase 2 subfamily.

This is an uncharacterized protein from Bacillus subtilis (strain 168).